A 333-amino-acid chain; its full sequence is Ribosomal RNA small subunit methyltransferase H (333 aa).

Residues 39-41, aspartate 57, phenylalanine 84, aspartate 101, and glutamine 108 contribute to the S-adenosyl-L-methionine site; that span reads GGY.

This sequence belongs to the methyltransferase superfamily. RsmH family.

The protein resides in the cytoplasm. The enzyme catalyses cytidine(1402) in 16S rRNA + S-adenosyl-L-methionine = N(4)-methylcytidine(1402) in 16S rRNA + S-adenosyl-L-homocysteine + H(+). In terms of biological role, specifically methylates the N4 position of cytidine in position 1402 (C1402) of 16S rRNA. This Dinoroseobacter shibae (strain DSM 16493 / NCIMB 14021 / DFL 12) protein is Ribosomal RNA small subunit methyltransferase H.